Here is a 945-residue protein sequence, read N- to C-terminus: MSNKKADSKPQAKYPVNLLDTPFPMRGDLPKREPQWVKEWEERGIYEKIRAASAGRPKFILHDGPPYANGDIHLGHAVNKILKDIVVKSRNMAGFDAPYVPGWDCHGMPIEIQIEKQFGKSLPAAEVMSKARAYATEQIEKQKVGFKRLGVLGDWANPYKTMNFVNEAEELRALGKIIEKGYVYRGLKPVNWCFDCGSALAEAEVEYKDRTDPTIDVMFAFAEPEKTAQAFGLPALPRAEGGIVIWTTTPWTIPANQALNLHPEIVYALVDTERGLLIIAEERVEACMTDFKLTGRVVATAPGVKLAGLRFHHPLASAHPGYKRTAPVYLGDYVTTDTGTGVVHSSPAYGIEDFVSCKAHGMTDSDFINPVMGDGRYIESLPLFGGLSIWDANPKIVEALNAAGSLLRSEKYTHSYMHCWRHKTPIIYRATSQWFAGMDVTPRDGGKTLRETALEGVDATAFYPSWGKQRLFSMIANRPDWTLSRQRQWGVPMAFFVHKETGELHPRTLELLEEVAKRVEQSGIEAWQTLDPRELIGDDANLYEKNRDTLDVWFDSGTTHWHVLRGSHKDQLQFPADLYLEGSDQHRGWFHSSLLTASMIDGRAPYKGLLTHGFTVDGEGRKMSKSLGNGIDPHEVANRLGAEIIRLWIASTDYSGELAISEEILKRVTEGYRRIRNTLRFLLANLSDFDFAQHAVPVDEWLEIDRYAVAFSQQLQTELLGHYEKYEFHPVVAKLQTYCSEDLGGFYLDVLKDRLYTSAADSRARRSAQTALYHLTHGLLRVLAPFLSFTAEEAWKVFQPASDTIYTETYYAYPEVAGSAALIEKWALLRDVRGNVTKALEEARTANRIGSSLQAEVAVHASGARYDALTSLGDDLKFVLITSAATVVKVDDEAQESVDVAASKYQKCERCWHYREDVGAHADHPTLCGRCFSNLFENGEIRSAA.

Positions 66–76 (PYANGDIHLGH) match the 'HIGH' region motif. Glutamate 581 is an L-isoleucyl-5'-AMP binding site. A 'KMSKS' region motif is present at residues 622–626 (KMSKS). Lysine 625 serves as a coordination point for ATP. The Zn(2+) site is built by cysteine 908, cysteine 911, cysteine 928, and cysteine 931.

The protein belongs to the class-I aminoacyl-tRNA synthetase family. IleS type 1 subfamily. As to quaternary structure, monomer. Zn(2+) serves as cofactor.

Its subcellular location is the cytoplasm. It catalyses the reaction tRNA(Ile) + L-isoleucine + ATP = L-isoleucyl-tRNA(Ile) + AMP + diphosphate. Its function is as follows. Catalyzes the attachment of isoleucine to tRNA(Ile). As IleRS can inadvertently accommodate and process structurally similar amino acids such as valine, to avoid such errors it has two additional distinct tRNA(Ile)-dependent editing activities. One activity is designated as 'pretransfer' editing and involves the hydrolysis of activated Val-AMP. The other activity is designated 'posttransfer' editing and involves deacylation of mischarged Val-tRNA(Ile). The protein is Isoleucine--tRNA ligase of Burkholderia lata (strain ATCC 17760 / DSM 23089 / LMG 22485 / NCIMB 9086 / R18194 / 383).